Consider the following 275-residue polypeptide: MNYKNPTHLQAAILDWAGTVVDFGSFAPTQIFVEAFAEFDVEVSIEEARGPMGMGKWDHIRTLCDQPQIAERYRKVFGRTPTDDDVTAIYQRFMPLQIEKIAVHSALIPGALETLTGLRQNGLKIGSCSGYPKVVMDKVVELAAKNGYVADHVVATDETPNGRPWPAQALANVIALGIDDVAACVKVDDTVPGILEGRRAGMWTVALVCSGNALGLTYEGYRALDPNTLEAERKRIHAMFEGSRPHYLIDTINELPGVITDINQRLARGEMPQAV.

The Nucleophile role is filled by Asp-15. Residues Asp-15 and Ala-17 each coordinate Mg(2+). The active-site Schiff-base intermediate with substrate is the Lys-56. Asp-189 provides a ligand contact to Mg(2+).

It belongs to the HAD-like hydrolase superfamily. PhnX family. As to quaternary structure, homodimer. Mg(2+) serves as cofactor.

The catalysed reaction is phosphonoacetaldehyde + H2O = acetaldehyde + phosphate + H(+). Functionally, involved in phosphonate degradation. In Pseudomonas putida (Arthrobacter siderocapsulatus), this protein is Phosphonoacetaldehyde hydrolase.